A 98-amino-acid chain; its full sequence is NADH-ubiquinone oxidoreductase chain 4L (98 aa).

A run of 3 helical transmembrane segments spans residues 2 to 22 (MMAV…TLMF), 26 to 46 (LMST…ITTI), and 59 to 79 (IPIV…ALLV).

The protein belongs to the complex I subunit 4L family. Core subunit of respiratory chain NADH dehydrogenase (Complex I) which is composed of 45 different subunits.

It is found in the mitochondrion inner membrane. The enzyme catalyses a ubiquinone + NADH + 5 H(+)(in) = a ubiquinol + NAD(+) + 4 H(+)(out). Functionally, core subunit of the mitochondrial membrane respiratory chain NADH dehydrogenase (Complex I) which catalyzes electron transfer from NADH through the respiratory chain, using ubiquinone as an electron acceptor. Part of the enzyme membrane arm which is embedded in the lipid bilayer and involved in proton translocation. This Phodopus sungorus (Striped hairy-footed hamster) protein is NADH-ubiquinone oxidoreductase chain 4L (MT-ND4L).